Reading from the N-terminus, the 465-residue chain is MVSSQRPVPNKIQKQQYLSISPSNSVLKDDVELEFSDVFGPLPEEANDIAYDEPAVVYSRSHSLVGPCSLDSHSLKLTKLTLLETEDSIDLVECLEGESLKENDDFSGNDDSDNEKALEGDLVKVSGVVGIDDFEVMKVVGKGAFGKVYQVRKKETSEIYAMKVMRKDHIMEKNHAEYMKAERDILTKIDHPFIVQLKYSFQTKYRLYLVLDFINGGHLFFQLYHQGLFREDLARVYTAEIVSAVSHLHEKGIMHRDLKPENILMDTDGHVMLTDFGLAKEFEENTRSNSMCGTTEYMAPEIVRGKGHDKAADWWSVGILLYEMLTGKPPFLGSKGKIQQKIVKDKIKLPQFLSNEAHAILKGLLQKEPERRLGSGLSGAEEIKQHKWFKGINWKKLEAREVMPSFKPEVSGRQCIANFDKCWTDMSVLDSPASSPSSDPKANPFTNFTYVRPPPSFLHQSTTTL.

An LVxCxE motif motif is present at residues 91 to 96 (LVECLE). Positions 134 to 389 (FEVMKVVGKG…AEEIKQHKWF (256 aa)) constitute a Protein kinase domain. Residues 140-148 (VGKGAFGKV) and lysine 163 each bind ATP. Aspartate 257 acts as the Proton acceptor in catalysis. The activation loop stretch occupies residues 275 to 301 (DFGLAKEFEENTRSNSMCGTTEYMAPE). Serine 290 carries the post-translational modification Phosphoserine; by PDPK1. The AGC-kinase C-terminal domain occupies 390–460 (KGINWKKLEA…VRPPPSFLHQ (71 aa)). Position 449 is a phosphothreonine; by TOR (threonine 449).

The protein belongs to the protein kinase superfamily. AGC Ser/Thr protein kinase family. S6 kinase subfamily. As to quaternary structure, interacts with RAPTOR1. Interacts with RBR1-E2FB complex through its LVxCxE motif. Interacts with TAP46. Binds to MRF1. Undergoes serine-specific autophosphorylation. Phosphorylated at Thr-449 by TOR. Expressed in all tissues.

It is found in the cytoplasm. The protein resides in the nucleus. It catalyses the reaction L-seryl-[protein] + ATP = O-phospho-L-seryl-[protein] + ADP + H(+). The enzyme catalyses L-threonyl-[protein] + ATP = O-phospho-L-threonyl-[protein] + ADP + H(+). Its activity is regulated as follows. Activated by PDK1. Repressed during osmotic stress. Downstream effector of TOR signaling pathway involved in osmotic stress response. Could be involved in the control of plant growth and development. Phosphorylates the ribosomal proteins P14, P16 and S6. Functions as a repressor of cell proliferation and required for maintenance of chromosome stability and ploidy levels through the RBR1-E2F pathway. Mediates the phosphorylation of MRFs (e.g. MRF1). The sequence is that of Serine/threonine-protein kinase AtPK1/AtPK6 from Arabidopsis thaliana (Mouse-ear cress).